The primary structure comprises 130 residues: Small ribosomal subunit protein uS8 (130 aa).

Belongs to the universal ribosomal protein uS8 family. As to quaternary structure, part of the 30S ribosomal subunit.

Functionally, one of the primary rRNA binding proteins, it binds directly to 16S rRNA central domain where it helps coordinate assembly of the platform of the 30S subunit. This Thermococcus sibiricus (strain DSM 12597 / MM 739) protein is Small ribosomal subunit protein uS8.